Consider the following 475-residue polypeptide: Aspartyl/glutamyl-tRNA(Asn/Gln) amidotransferase subunit B (475 aa).

The protein belongs to the GatB/GatE family. GatB subfamily. As to quaternary structure, heterotrimer of A, B and C subunits.

It catalyses the reaction L-glutamyl-tRNA(Gln) + L-glutamine + ATP + H2O = L-glutaminyl-tRNA(Gln) + L-glutamate + ADP + phosphate + H(+). The enzyme catalyses L-aspartyl-tRNA(Asn) + L-glutamine + ATP + H2O = L-asparaginyl-tRNA(Asn) + L-glutamate + ADP + phosphate + 2 H(+). Its function is as follows. Allows the formation of correctly charged Asn-tRNA(Asn) or Gln-tRNA(Gln) through the transamidation of misacylated Asp-tRNA(Asn) or Glu-tRNA(Gln) in organisms which lack either or both of asparaginyl-tRNA or glutaminyl-tRNA synthetases. The reaction takes place in the presence of glutamine and ATP through an activated phospho-Asp-tRNA(Asn) or phospho-Glu-tRNA(Gln). This is Aspartyl/glutamyl-tRNA(Asn/Gln) amidotransferase subunit B from Helicobacter pylori (strain HPAG1).